Here is a 387-residue protein sequence, read N- to C-terminus: Dual-specificity RNA methyltransferase RlmN (387 aa).

Residue glutamate 110 is the Proton acceptor of the active site. The 233-residue stretch at valine 117–arginine 349 folds into the Radical SAM core domain. A disulfide bridge connects residues cysteine 124 and cysteine 360. Cysteine 131, cysteine 135, and cysteine 138 together coordinate [4Fe-4S] cluster. S-adenosyl-L-methionine is bound by residues glycine 186 to glutamate 187, serine 218, serine 240 to histidine 242, and asparagine 317. The active-site S-methylcysteine intermediate is the cysteine 360.

Belongs to the radical SAM superfamily. RlmN family. Requires [4Fe-4S] cluster as cofactor.

It localises to the cytoplasm. It catalyses the reaction adenosine(2503) in 23S rRNA + 2 reduced [2Fe-2S]-[ferredoxin] + 2 S-adenosyl-L-methionine = 2-methyladenosine(2503) in 23S rRNA + 5'-deoxyadenosine + L-methionine + 2 oxidized [2Fe-2S]-[ferredoxin] + S-adenosyl-L-homocysteine. The catalysed reaction is adenosine(37) in tRNA + 2 reduced [2Fe-2S]-[ferredoxin] + 2 S-adenosyl-L-methionine = 2-methyladenosine(37) in tRNA + 5'-deoxyadenosine + L-methionine + 2 oxidized [2Fe-2S]-[ferredoxin] + S-adenosyl-L-homocysteine. Functionally, specifically methylates position 2 of adenine 2503 in 23S rRNA and position 2 of adenine 37 in tRNAs. m2A2503 modification seems to play a crucial role in the proofreading step occurring at the peptidyl transferase center and thus would serve to optimize ribosomal fidelity. In Hyphomonas neptunium (strain ATCC 15444), this protein is Dual-specificity RNA methyltransferase RlmN.